Here is an 818-residue protein sequence, read N- to C-terminus: Adhesion G protein-coupled receptor E5 (818 aa).

Residues Met1–Thr23 form the signal peptide. The Extracellular portion of the chain corresponds to Gln24–Thr533. The region spanning Glu27–Glu68 is the EGF-like 1 domain. 12 cysteine pairs are disulfide-bonded: Cys31–Cys41, Cys35–Cys47, Cys49–Cys67, Cys73–Cys86, Cys80–Cys95, Cys97–Cys118, Cys169–Cys182, Cys176–Cys191, Cys193–Cys212, Cys218–Cys231, Cys225–Cys240, and Cys242–Cys260. Asn44 is a glycosylation site (N-linked (GlcNAc...) asparagine). The EGF-like 2; calcium-binding domain maps to Asp69 to Gln119. A glycan (N-linked (GlcNAc...) asparagine) is linked at Asn112. Residues Asp165–Glu213 form the EGF-like 3; calcium-binding domain. The region spanning Asp214–Gln261 is the EGF-like 4; calcium-binding domain. Asn227 is a glycosylation site (N-linked (GlcNAc...) asparagine). Asn299 and Asn395 each carry an N-linked (GlcNAc...) asparagine glycan. In terms of domain architecture, GAIN-B spans Pro347–Gln525. The residue at position 425 (Ser425) is a Phosphoserine. Asn461 and Asn502 each carry an N-linked (GlcNAc...) asparagine glycan. Disulfide bonds link Cys482-Cys507 and Cys499-Cys509. The interval Cys482–Gln525 is GPS. A helical membrane pass occupies residues Lys534–Val554. Residues Lys555–Thr562 are Cytoplasmic-facing. A helical membrane pass occupies residues Met563 to Val583. Residues Glu584–His602 are Extracellular-facing. The chain crosses the membrane as a helical span at residues Phe603–Val623. Residues Val624–Arg637 lie on the Cytoplasmic side of the membrane. A helical membrane pass occupies residues Cys638–Met658. At Asp659–Ser679 the chain is on the extracellular side. The chain crosses the membrane as a helical span at residues Phe680–Trp700. The Cytoplasmic portion of the chain corresponds to Lys701 to Thr723. The helical transmembrane segment at Ile724–Phe744 threads the bilayer. The Extracellular segment spans residues Asn745–Ser752. Residues Tyr753 to Leu773 traverse the membrane as a helical segment. The Cytoplasmic segment spans residues Asn774–Met818. The residue at position 798 (Ser798) is a Phosphoserine. Residues Ser799–Thr808 show a composition bias toward low complexity. Residues Ser799 to Met818 are disordered. Phosphothreonine is present on Thr808. Residues Arg809–Met818 are compositionally biased toward polar residues. 2 positions are modified to phosphoserine: Ser814 and Ser816.

It belongs to the G-protein coupled receptor 2 family. LN-TM7 subfamily. Forms a heterodimer, consisting of a large extracellular region (alpha subunit) non-covalently linked to a seven-transmembrane moiety (beta subunit). Interacts with complement decay-accelerating factor (DAF). The largest isoform (isoform 1) do not interact with DAF. Also interacts with chondroitin sulfate. In terms of processing, proteolytically cleaved into 2 subunits, an extracellular alpha subunit and a seven-transmembrane subunit. Although predominantly expressed by cells of the immune system, expressed ubiquitously with particularly high levels of expression in the lung and the thymus gland. In the spleen, expression is detected on most myeloid cells and variable portions of T-cells, B-cells and NK cells. In the bone marrow, expressed in nearly all myeloid cells, whereas little if any expression is found on erythroid cells.

It localises to the cell membrane. The protein localises to the secreted. The protein resides in the extracellular space. Its function is as follows. Receptor potentially involved in both adhesion and signaling processes early after leukocyte activation. Plays an essential role in leukocyte migration. The protein is Adhesion G protein-coupled receptor E5 of Mus musculus (Mouse).